A 104-amino-acid polypeptide reads, in one-letter code: Integration host factor subunit alpha (104 aa).

Residues 51-70 are disordered; the sequence is GNFQLRDKPQRPGRNPKTGE.

The protein belongs to the bacterial histone-like protein family. In terms of assembly, heterodimer of an alpha and a beta chain.

Functionally, this protein is one of the two subunits of integration host factor, a specific DNA-binding protein that functions in genetic recombination as well as in transcriptional and translational control. This chain is Integration host factor subunit alpha, found in Ralstonia nicotianae (strain ATCC BAA-1114 / GMI1000) (Ralstonia solanacearum).